Reading from the N-terminus, the 131-residue chain is Glycine cleavage system H protein (131 aa).

A Lipoyl-binding domain is found at 24 to 106; that stretch reads TVRVGITDYA…YGEGWLVELQ (83 aa). Lys65 is subject to N6-lipoyllysine.

Belongs to the GcvH family. The glycine cleavage system is composed of four proteins: P, T, L and H. It depends on (R)-lipoate as a cofactor.

The glycine cleavage system catalyzes the degradation of glycine. The H protein shuttles the methylamine group of glycine from the P protein to the T protein. This is Glycine cleavage system H protein from Mycolicibacterium gilvum (strain PYR-GCK) (Mycobacterium gilvum (strain PYR-GCK)).